The following is a 91-amino-acid chain: MARMVHCVKLNKEAEGLDFPPLPGELGKKLWQSVSKEAWAGWLKHQTMLINENRLNMADSRARQYLLKQTEKYFFGDGADEAAGYVPPPSA.

The protein belongs to the Fe(2+)-trafficking protein family.

Could be a mediator in iron transactions between iron acquisition and iron-requiring processes, such as synthesis and/or repair of Fe-S clusters in biosynthetic enzymes. This Ralstonia pickettii (strain 12J) protein is Probable Fe(2+)-trafficking protein.